The sequence spans 599 residues: Aspartate--tRNA(Asp/Asn) ligase (599 aa).

Residue Glu-173 coordinates L-aspartate. Residues 197-200 (QLFK) form an aspartate region. Arg-219 contacts L-aspartate. Residues 219-221 (RDE) and Gln-228 each bind ATP. His-449 is an L-aspartate binding site. ATP is bound at residue Glu-482. Residue Arg-489 participates in L-aspartate binding. Position 534–537 (534–537 (GLDR)) interacts with ATP.

The protein belongs to the class-II aminoacyl-tRNA synthetase family. Type 1 subfamily. In terms of assembly, homodimer.

The protein resides in the cytoplasm. It catalyses the reaction tRNA(Asx) + L-aspartate + ATP = L-aspartyl-tRNA(Asx) + AMP + diphosphate. Functionally, aspartyl-tRNA synthetase with relaxed tRNA specificity since it is able to aspartylate not only its cognate tRNA(Asp) but also tRNA(Asn). Reaction proceeds in two steps: L-aspartate is first activated by ATP to form Asp-AMP and then transferred to the acceptor end of tRNA(Asp/Asn). The protein is Aspartate--tRNA(Asp/Asn) ligase of Marinobacter nauticus (strain ATCC 700491 / DSM 11845 / VT8) (Marinobacter aquaeolei).